Reading from the N-terminus, the 78-residue chain is Mu-conotoxin BuIIIB (78 aa).

Positions Met-1 to Pro-22 are cleaved as a signal peptide. The propeptide occupies Gln-23–Arg-51. Positions Asp-26–Pro-46 are disordered. Residues Pro-28–Asp-38 are compositionally biased toward basic and acidic residues. Intrachain disulfides connect Cys-56/Cys-68, Cys-57/Cys-74, and Cys-64/Cys-75. Cys-75 is subject to Cysteine amide.

The protein belongs to the conotoxin M superfamily. Expressed by the venom duct.

It is found in the secreted. Its function is as follows. Mu-conotoxins block voltage-gated sodium channels (Nav). This synthetic toxin potently blocks rNav1.4/SCN4A (Kd=0.34-3.6 nM), rNav1.2/SCN2A (Kd=13 nM), rNav1.3/SCN3A (Kd=200 nM), rNav1.1/SCN1A (Kd=360 nM), mNav1.6/SCN8A (IC(50)=1.8 uM), rNav1.5/SCN5A (IC(50)=9 uM), rNav1.6/SCN8A (IC(50)&gt;30 uM). It is noteworthy that the toxin is 50-fold more potent on mouse Nav1.6 than on rat Nav1.6. The block of SCN4A is very slowly reversible. The protein is Mu-conotoxin BuIIIB of Conus bullatus (Bubble cone).